A 728-amino-acid chain; its full sequence is U-box domain-containing protein 4 (728 aa).

In terms of domain architecture, U-box spans 296–370; the sequence is SVPKEFSCPI…SQWCGVYGLQ (75 aa). ARM repeat units lie at residues 441–483 and 526–568; these read GAIP…EQEG and GAVE…ESCA.

It carries out the reaction S-ubiquitinyl-[E2 ubiquitin-conjugating enzyme]-L-cysteine + [acceptor protein]-L-lysine = [E2 ubiquitin-conjugating enzyme]-L-cysteine + N(6)-ubiquitinyl-[acceptor protein]-L-lysine.. The protein operates within protein modification; protein ubiquitination. In terms of biological role, possesses E3 ubiquitin-protein ligase in vitro. This chain is U-box domain-containing protein 4 (PUB4), found in Oryza sativa subsp. japonica (Rice).